Here is a 373-residue protein sequence, read N- to C-terminus: Sorting nexin-21 (373 aa).

Residues 1 to 107 are disordered; that stretch reads MHRGTQEGAM…RSPPPDGQWG (107 aa). The span at 21–37 shows a compositional bias: low complexity; the sequence is ALAGDGPGEAAASPEAE. Residues 55 to 65 are compositionally biased toward polar residues; it reads SRLSGTLSFTS. Acidic residues predominate over residues 66–81; it reads AEDDEDDEDEDDEEAG. Residues 129 to 246 form the PX domain; sequence QRLLFEVTSA…DFFVLPELRR (118 aa). The a 1,2-diacyl-sn-glycero-3-phospho-(1D-myo-inositol-3-phosphate) site is built by R171, S173, K198, and R212.

This sequence belongs to the sorting nexin family. Monomer. In terms of tissue distribution, highly expressed in fetus liver, but only weakly expressed in brain, skeleton muscle, smooth muscle, and cardiac muscle, kidney, and adrenal gland.

The protein localises to the cytoplasmic vesicle membrane. It localises to the early endosome membrane. Binds to membranes enriched in phosphatidylinositol 3-phosphate (PtdIns(P3)) and phosphatidylinositol 4,5-bisphosphate. May be involved in several stages of intracellular trafficking. The protein is Sorting nexin-21 (SNX21) of Homo sapiens (Human).